Consider the following 167-residue polypeptide: Small ribosomal subunit protein uS5 (167 aa).

The region spanning 11–74 (LQEKLIAVNR…EKARRNMINV (64 aa)) is the S5 DRBM domain.

It belongs to the universal ribosomal protein uS5 family. Part of the 30S ribosomal subunit. Contacts proteins S4 and S8.

Functionally, with S4 and S12 plays an important role in translational accuracy. Located at the back of the 30S subunit body where it stabilizes the conformation of the head with respect to the body. The polypeptide is Small ribosomal subunit protein uS5 (Shigella dysenteriae serotype 1 (strain Sd197)).